The sequence spans 122 residues: Interferon alpha-inducible protein 27, mitochondrial (122 aa).

The transit peptide at 1 to 33 (MEASALTSSAVTSVAKVVRVASGSAVVLPLARI) directs the protein to the mitochondrion. Residues 34-57 (ATVVIGGVVAMAAVPMVLSAMGFT) traverse the membrane as a helical segment. A Glycyl lysine isopeptide (Lys-Gly) (interchain with G-Cter in ubiquitin) cross-link involves residue Lys-69. The next 2 helical transmembrane spans lie at 71 to 91 (MSAAAIANGGGVASGSLVATL) and 99 to 119 (LSGLTKFILGSIGSAIAAVIA). Residues 76 to 122 (IANGGGVASGSLVATLQSLGATGLSGLTKFILGSIGSAIAAVIARFY) form a mediates interaction with SKP2 and hepatitis C virus non-structural protein NS5A region. Residues 103–112 (TKFILGSIGS) form a required for hepatitis C virus non-structural protein NS5A degradation region.

It belongs to the IFI6/IFI27 family. Homodimer. Interacts with hepatitis C virus/HCV non-structural protein NS5A; promotes the ubiquitin-mediated proteasomal degradation of NS5A. Interacts with SKP2; promotes the ubiquitin-mediated proteasomal degradation of NS5A. Interacts with NR4A1. May interact with BCL2. Post-translationally, ubiquitinated by TRIM21 via 'Lys-6'-linked ubiquitin chains leading to IFI27 mitochondrial migration.

Its subcellular location is the mitochondrion membrane. It is found in the nucleus inner membrane. It localises to the endoplasmic reticulum membrane. Probable adapter protein involved in different biological processes. Part of the signaling pathways that lead to apoptosis. Involved in type-I interferon-induced apoptosis characterized by a rapid and robust release of cytochrome C from the mitochondria and activation of BAX and caspases 2, 3, 6, 8 and 9. Also functions in TNFSF10-induced apoptosis. May also have a function in the nucleus, where it may be involved in the interferon-induced negative regulation of the transcriptional activity of NR4A1, NR4A2 and NR4A3 through the enhancement of XPO1-mediated nuclear export of these nuclear receptors. May thereby play a role in the vascular response to injury. In the innate immune response, has an antiviral activity towards hepatitis C virus/HCV. May prevent the replication of the virus by recruiting both the hepatitis C virus non-structural protein 5A/NS5A and the ubiquitination machinery via SKP2, promoting the ubiquitin-mediated proteasomal degradation of NS5A. Also promotes virus-induced pyroptosis by activating CASP3 in the mitochondria after 'Lys-6'-linked ubiquitination by TRIM21. The sequence is that of Interferon alpha-inducible protein 27, mitochondrial from Homo sapiens (Human).